The chain runs to 690 residues: MSSKGDLSRCRNIGIMAHIDAGKTTTTERILFYTGKQNRIGEVHEGAASMDWMEQERERGITITSAATTCFWNDCRINIIDTPGHVDFTIEVERSLRVLDGAVAVFDGVAGVEPQSETVWRQADKYDVPRICFVNKMDRIGADFYACVDMIKDRLGAVPLVLQLPIGVDKSFVGVVDLVEMRSITWEEDSLGAKFNYGEIPSDLMEKAQDYRARLIESAVEMNDEAMNLYLDGGEISVPLLKSCIRSGVIGAKFVPVLCGSAFKNKGVQPLLDAVVDFLPSPSDIPTIEGASASDPQKAVTIKSSVDDKFVALAFKVMVDRFVGSLTFIRVYSGKLTGKSVVLNSAKGVTESVGRILRMHANNREDISEIQAGDIAALAGLKKTTTGDTLCDQNFPVVLEKMDFPESVMEIAVEPVSTADQEKMGTALSRLVAEDPSLKVCVNSESGQTILKGMGELHLEIIVDRMKREFGVEASVGAPQVAYRETITKSAEIEYVHKKQTGGAGQFAKVNILFEPLPPGSGFEFENKITCGAIPKEYIPGVQSGLELVKETGMIAGFPVIDFKATLFDGAFHEVDSSPLAFELAAKGAFREMANKAGPVLLEPIMRVEIITPDEYMGDVIGDVNSRRGRVAEMQDRHNAKLITAFIPLGKMFGYVKDLRSMSQGRAQYSMYFARYERVPENAVDNVMKK.

The region spanning Ser-8–Ser-283 is the tr-type G domain. Residues Ala-17 to Thr-24, Asp-81 to His-85, and Asn-135 to Asp-138 each bind GTP.

This sequence belongs to the TRAFAC class translation factor GTPase superfamily. Classic translation factor GTPase family. EF-G/EF-2 subfamily.

The protein resides in the cytoplasm. Its function is as follows. Catalyzes the GTP-dependent ribosomal translocation step during translation elongation. During this step, the ribosome changes from the pre-translocational (PRE) to the post-translocational (POST) state as the newly formed A-site-bound peptidyl-tRNA and P-site-bound deacylated tRNA move to the P and E sites, respectively. Catalyzes the coordinated movement of the two tRNA molecules, the mRNA and conformational changes in the ribosome. The sequence is that of Elongation factor G from Anaplasma marginale (strain St. Maries).